A 1418-amino-acid polypeptide reads, in one-letter code: ABC transporter G family member 38 (1418 aa).

Positions 1–27 are disordered; it reads MAHYRVSSEVENIMNRDRSHRKNEEED. In terms of domain architecture, ABC transporter 1 spans 147 to 419; that stretch reads TKIRVLPDRK…FEFMGFKCPE (273 aa). Residue 179–186 coordinates ATP; it reads GPPGSGKS. An ABC transmembrane type-2 1 domain is found at 497-710; sequence ELLKACLERE…IQTAVSVNEF (214 aa). Helical transmembrane passes span 516–536, 548–568, 600–620, 634–654, 659–679, and 729–749; these read TFVL…VVFW, GIIY…SGFF, IITF…TYFT, YLVL…IAAV, VVSN…SGYV, and FFVE…STIL. In terms of domain architecture, ABC transporter 2 spans 821–1073; that stretch reads MTFENITYSV…QLIEYFEGIR (253 aa). Residue 866-873 coordinates ATP; the sequence is GVSGAGKT. The ABC transmembrane type-2 2 domain occupies 1146 to 1360; the sequence is SQFQACLWKQ…GLYGLTIAQY (215 aa). A run of 7 helical transmembrane segments spans residues 1167 to 1187, 1197 to 1217, 1249 to 1269, 1284 to 1304, 1310 to 1330, 1341 to 1361, and 1387 to 1407; these read AVRF…FWSL, IFNS…QSAA, VIIE…IVYG, IFFT…VISV, IASI…GFTI, WFTY…AQYG, and FLWV…FIYA.

It belongs to the ABC transporter superfamily. ABCG family. PDR (TC 3.A.1.205) subfamily. In terms of tissue distribution, expressed in roots and siliques at low levels.

It is found in the membrane. May be a general defense protein. This chain is ABC transporter G family member 38 (ABCG38), found in Arabidopsis thaliana (Mouse-ear cress).